Reading from the N-terminus, the 272-residue chain is Eukaryotic translation initiation factor 3 subunit G (272 aa).

2 disordered regions span residues 1–28 (MPAL…PTEI) and 143–187 (AGKA…RGRD). An RRM domain is found at 190–268 (TAIRISNLSE…LILNVEWSKP (79 aa)).

This sequence belongs to the eIF-3 subunit G family. As to quaternary structure, component of the eukaryotic translation initiation factor 3 (eIF-3) complex.

The protein resides in the cytoplasm. RNA-binding component of the eukaryotic translation initiation factor 3 (eIF-3) complex, which is involved in protein synthesis of a specialized repertoire of mRNAs and, together with other initiation factors, stimulates binding of mRNA and methionyl-tRNAi to the 40S ribosome. The eIF-3 complex specifically targets and initiates translation of a subset of mRNAs involved in cell proliferation. This subunit can bind 18S rRNA. This Culex quinquefasciatus (Southern house mosquito) protein is Eukaryotic translation initiation factor 3 subunit G.